Consider the following 271-residue polypeptide: Insulin-like growth factor-binding protein 5 (271 aa).

The first 19 residues, 1 to 19, serve as a signal peptide directing secretion; the sequence is MVISVVLLLLAACAVPAQG. The 81-residue stretch at 22–102 folds into the IGFBP N-terminal domain; sequence SFVHCEPCDE…LHGRGVCLNE (81 aa). Intrachain disulfides connect cysteine 26–cysteine 52, cysteine 29–cysteine 54, cysteine 37–cysteine 55, cysteine 44–cysteine 58, cysteine 66–cysteine 79, and cysteine 73–cysteine 99. A compositionally biased stretch (basic and acidic residues) spans 109–121; the sequence is TKIERDSREHEEP. The disordered stretch occupies residues 109–129; the sequence is TKIERDSREHEEPTTSEMAEE. Serine 115 carries the post-translational modification Phosphoserine. Residues 188–262 form the Thyroglobulin type-1 domain; it reads QGPCRRHMEA…MEYVDGDFQC (75 aa). Cystine bridges form between cysteine 191–cysteine 218, cysteine 229–cysteine 240, and cysteine 242–cysteine 262.

As to quaternary structure, interacts with IGF1; this interaction enhances the growth stimulatory effects of IGF1 on fibroblasts. Interacts with CAV1; this interaction allows trafficking of IGFBP5 from the plasma membrane to the nucleus. Interacts with NCL; this interaction is necessary for IGFBP5 localization to the nucleus. As to expression, mostly in kidney.

It is found in the secreted. It localises to the cytoplasm. Its subcellular location is the nucleus. Multifunctional protein that plays a critical role in regulating the availability of IGFs to their receptors and thereby regulates IGF-mediated cellular processes including proliferation, differentiation, and apoptosis in a cell-type specific manner. Increases the cell proliferation of osteoblasts, intestinal smooth muscle cells and neuroblastoma cells. Enhances adhesion and survival of epithelial cells but decreases adhesion of mesenchymal cells. Once secreted, acts as a major mediator of mTORC1-dependent feedback inhibition of IGF1 signaling. Also plays a role in the induction of extracellular matrix (ECM) production and deposition independently of its nuclear translocation and binding to IGFs. Acts itself as a growth factor that can act independently of IGFs to regulate bone formation. Acts as a ligand for the ROR1 receptor which triggers formation of ROR1/HER2 heterodimer to enhance CREB oncogenic signaling. The chain is Insulin-like growth factor-binding protein 5 (Igfbp5) from Rattus norvegicus (Rat).